The primary structure comprises 299 residues: pH-regulated antigen PRA1 (299 aa).

Positions 1 to 15 (MNYLLFCLFFAFSVA) are cleaved as a signal peptide. Residues N48, N89, N135, and N208 are each glycosylated (N-linked (GlcNAc...) asparagine). The segment at 253–299 (FEDSDSGSDSGASSTASSSHQHTDSNPSATTDANSHCHTHADGEVHC) is disordered. A compositionally biased stretch (low complexity) spans 259–272 (GSDSGASSTASSSH). A compositionally biased stretch (polar residues) spans 278-288 (NPSATTDANSH).

It belongs to the ZPS1 family. As to quaternary structure, component of a multiprotein complex of 250 kDa composed of at least HYR1, MP65, and PRA1. Interacts with host Integrin alpha-M/beta-2 heterodimer. Also binds human factor H (CFH), CFHR1, plasminogen (PLG), complement C3, and C4BPA. Interacts with ZRT101. N- and O-glycosylated. The N- and 0-glycosidically linked carbohydrates represent 18 to 20 percent and 3 to 4 percent, respectively, of the molecular mass of PRA1. 0-linked sugar residues may be involved in the interaction with fibrinogen. Contributes highly to the carbohydrate component of the matrix. Treatment with tunicamycin impairs glycosylation.

It localises to the secreted. Functionally, cell surface protein involved in the host-parasite interaction during candidal infection. With MP65, represents a major component of the biofilm matrix. As a surface protein, binds the two human complement regulators CFH and CFHR1, as well as plasminogen PLG, mediates complement evasion and extra-cellular matrix interaction and/or degradation. As a released protein, enhances complement control in direct vicinity of the yeast and thus generates an additional protective layer which controls host complement attack, assisting the fungus in escaping host surveillance. Binds to host fluid-phase C3 and blocks cleavage of C3 to C3a and C3b, leading to inhibition of complement activation and protection from uptake of C.albicans by human macrophages. Also mediates human complement control and complement evasion through binding to C4BPA, another human complement inhibitor, as well as through binding to host integrin alpha-M/beta-2. Binds zinc from its environment and then reassociates with ZRT1 to acquire this essential metal. This chain is pH-regulated antigen PRA1, found in Candida albicans (strain SC5314 / ATCC MYA-2876) (Yeast).